The following is a 331-amino-acid chain: Anthranilate phosphoribosyltransferase (331 aa).

Residues G78, 81–82 (GD), T86, 88–91 (NVST), 106–114 (KHGNYSVSS), and S118 contribute to the 5-phospho-alpha-D-ribose 1-diphosphate site. G78 provides a ligand contact to anthranilate. S90 lines the Mg(2+) pocket. N109 is a binding site for anthranilate. R164 provides a ligand contact to anthranilate. 2 residues coordinate Mg(2+): D222 and E223.

It belongs to the anthranilate phosphoribosyltransferase family. As to quaternary structure, homodimer. The cofactor is Mg(2+).

It carries out the reaction N-(5-phospho-beta-D-ribosyl)anthranilate + diphosphate = 5-phospho-alpha-D-ribose 1-diphosphate + anthranilate. It participates in amino-acid biosynthesis; L-tryptophan biosynthesis; L-tryptophan from chorismate: step 2/5. Catalyzes the transfer of the phosphoribosyl group of 5-phosphorylribose-1-pyrophosphate (PRPP) to anthranilate to yield N-(5'-phosphoribosyl)-anthranilate (PRA). In Haloferax volcanii (strain ATCC 29605 / DSM 3757 / JCM 8879 / NBRC 14742 / NCIMB 2012 / VKM B-1768 / DS2) (Halobacterium volcanii), this protein is Anthranilate phosphoribosyltransferase.